The sequence spans 424 residues: Serine--tRNA ligase (424 aa).

Residue 231-233 (TAE) participates in L-serine binding. ATP-binding positions include 262-264 (RRE) and valine 278. Glutamate 285 contributes to the L-serine binding site. 349–352 (EVSS) provides a ligand contact to ATP. Position 384 (serine 384) interacts with L-serine.

It belongs to the class-II aminoacyl-tRNA synthetase family. Type-1 seryl-tRNA synthetase subfamily. In terms of assembly, homodimer. The tRNA molecule binds across the dimer.

It is found in the cytoplasm. The catalysed reaction is tRNA(Ser) + L-serine + ATP = L-seryl-tRNA(Ser) + AMP + diphosphate + H(+). It carries out the reaction tRNA(Sec) + L-serine + ATP = L-seryl-tRNA(Sec) + AMP + diphosphate + H(+). It participates in aminoacyl-tRNA biosynthesis; selenocysteinyl-tRNA(Sec) biosynthesis; L-seryl-tRNA(Sec) from L-serine and tRNA(Sec): step 1/1. In terms of biological role, catalyzes the attachment of serine to tRNA(Ser). Is also able to aminoacylate tRNA(Sec) with serine, to form the misacylated tRNA L-seryl-tRNA(Sec), which will be further converted into selenocysteinyl-tRNA(Sec). The chain is Serine--tRNA ligase from Chlamydia abortus (strain DSM 27085 / S26/3) (Chlamydophila abortus).